A 161-amino-acid polypeptide reads, in one-letter code: Phosphopantetheine adenylyltransferase (161 aa).

A substrate-binding site is contributed by Thr-9. Residues 9–10 and His-17 each bind ATP; that span reads TF. Positions 41, 73, and 87 each coordinate substrate. ATP is bound by residues 88–90, Glu-98, and 123–129; these read GLR and YQFISGT.

It belongs to the bacterial CoaD family. Homohexamer. It depends on Mg(2+) as a cofactor.

It localises to the cytoplasm. It catalyses the reaction (R)-4'-phosphopantetheine + ATP + H(+) = 3'-dephospho-CoA + diphosphate. The protein operates within cofactor biosynthesis; coenzyme A biosynthesis; CoA from (R)-pantothenate: step 4/5. In terms of biological role, reversibly transfers an adenylyl group from ATP to 4'-phosphopantetheine, yielding dephospho-CoA (dPCoA) and pyrophosphate. The sequence is that of Phosphopantetheine adenylyltransferase from Cupriavidus necator (strain ATCC 17699 / DSM 428 / KCTC 22496 / NCIMB 10442 / H16 / Stanier 337) (Ralstonia eutropha).